Consider the following 75-residue polypeptide: U6-lycotoxin-Ls1f (75 aa).

The first 21 residues, 1-21 (MKLLLFTALVLVVISLVEVEA), serve as a signal peptide directing secretion. Positions 22-25 (ENER) are excised as a propeptide.

This sequence belongs to the neurotoxin 19 (CSTX) family. 06 (U6-Lctx) subfamily. Contains 4 disulfide bonds. In terms of tissue distribution, expressed by the venom gland.

The protein resides in the secreted. The sequence is that of U6-lycotoxin-Ls1f from Lycosa singoriensis (Wolf spider).